The sequence spans 541 residues: Chaperonin GroEL 1 (541 aa).

ATP is bound by residues 29–32, 86–90, G413, and D492; these read TLGP and DGTTT.

The protein belongs to the chaperonin (HSP60) family. Forms a cylinder of 14 subunits composed of two heptameric rings stacked back-to-back. Interacts with the co-chaperonin GroES.

It is found in the cytoplasm. It catalyses the reaction ATP + H2O + a folded polypeptide = ADP + phosphate + an unfolded polypeptide.. Functionally, together with its co-chaperonin GroES, plays an essential role in assisting protein folding. The GroEL-GroES system forms a nano-cage that allows encapsulation of the non-native substrate proteins and provides a physical environment optimized to promote and accelerate protein folding. The sequence is that of Chaperonin GroEL 1 from Rhodococcus jostii (strain RHA1).